We begin with the raw amino-acid sequence, 502 residues long: Probable cobyric acid synthase (502 aa).

In terms of domain architecture, GATase cobBQ-type spans 250–448; it reads KITIGTLRLP…FHGIFHNFEF (199 aa). The active-site Nucleophile is Cys-330. Residue His-440 is part of the active site.

Belongs to the CobB/CobQ family. CobQ subfamily.

Its pathway is cofactor biosynthesis; adenosylcobalamin biosynthesis. Functionally, catalyzes amidations at positions B, D, E, and G on adenosylcobyrinic A,C-diamide. NH(2) groups are provided by glutamine, and one molecule of ATP is hydrogenolyzed for each amidation. In Methanosphaera stadtmanae (strain ATCC 43021 / DSM 3091 / JCM 11832 / MCB-3), this protein is Probable cobyric acid synthase.